Reading from the N-terminus, the 170-residue chain is Adenine phosphoribosyltransferase (170 aa).

Belongs to the purine/pyrimidine phosphoribosyltransferase family. As to quaternary structure, homodimer.

Its subcellular location is the cytoplasm. It catalyses the reaction AMP + diphosphate = 5-phospho-alpha-D-ribose 1-diphosphate + adenine. The protein operates within purine metabolism; AMP biosynthesis via salvage pathway; AMP from adenine: step 1/1. Catalyzes a salvage reaction resulting in the formation of AMP, that is energically less costly than de novo synthesis. The sequence is that of Adenine phosphoribosyltransferase from Thermotoga neapolitana (strain ATCC 49049 / DSM 4359 / NBRC 107923 / NS-E).